A 356-amino-acid polypeptide reads, in one-letter code: Competence protein ComGA (356 aa).

144–151 (GPTGSGKT) contributes to the ATP binding site.

It belongs to the GSP E family.

Its subcellular location is the cell membrane. In terms of biological role, required for uptake of DNA by competent cells. This chain is Competence protein ComGA (comGA), found in Bacillus subtilis (strain 168).